Reading from the N-terminus, the 245-residue chain is Orotidine 5'-phosphate decarboxylase (245 aa).

Substrate is bound by residues aspartate 22, lysine 44, 71–80 (DLKFHDIPNT), threonine 131, arginine 192, glutamine 201, glycine 221, and arginine 222. Residue lysine 73 is the Proton donor of the active site.

This sequence belongs to the OMP decarboxylase family. Type 1 subfamily. Homodimer.

The enzyme catalyses orotidine 5'-phosphate + H(+) = UMP + CO2. It participates in pyrimidine metabolism; UMP biosynthesis via de novo pathway; UMP from orotate: step 2/2. Functionally, catalyzes the decarboxylation of orotidine 5'-monophosphate (OMP) to uridine 5'-monophosphate (UMP). The polypeptide is Orotidine 5'-phosphate decarboxylase (Shigella flexneri).